Reading from the N-terminus, the 586-residue chain is Adenine deaminase (586 aa).

Belongs to the metallo-dependent hydrolases superfamily. Adenine deaminase family. Mn(2+) serves as cofactor.

The enzyme catalyses adenine + H2O + H(+) = hypoxanthine + NH4(+). The polypeptide is Adenine deaminase (Bdellovibrio bacteriovorus (strain ATCC 15356 / DSM 50701 / NCIMB 9529 / HD100)).